The chain runs to 1338 residues: Aldehyde oxidase 1 (1338 aa).

The 2Fe-2S ferredoxin-type domain maps to 5–92 (SELLFYVNGR…GTAVTTVEGI (88 aa)). Mo-molybdopterin is bound by residues Gln-113 and Cys-151. The FAD-binding PCMH-type domain maps to 236–421 (FGSERMMWFS…VSVNIPYSRK (186 aa)). Residues 264–271 (VIMGNTSV), Ala-345, Ser-354, His-358, Asp-367, and Leu-411 each bind FAD. Mo-molybdopterin contacts are provided by residues 806 to 807 (AF) and Met-1047. Ser-1068 bears the Phosphoserine mark. Residues 1088–1091 (GSVV), Gln-1203, and Leu-1268 each bind Mo-molybdopterin. Glu-1270 acts as the Proton acceptor; for azaheterocycle hydroxylase activity in catalysis.

This sequence belongs to the xanthine dehydrogenase family. In terms of assembly, homodimer. It depends on [2Fe-2S] cluster as a cofactor. The cofactor is FAD. Mo-molybdopterin is required as a cofactor. As to expression, detected at high levels in liver, also detected in lung, kidney, lacrimal gland and olfactory mucosa.

Its subcellular location is the cytoplasm. It catalyses the reaction an aldehyde + O2 + H2O = a carboxylate + H2O2 + H(+). The enzyme catalyses retinal + O2 + H2O = retinoate + H2O2 + H(+). Oxidase with broad substrate specificity, oxidizing aromatic azaheterocycles, such as N1-methylnicotinamide, N-methylphthalazinium and phthalazine, as well as aldehydes, such as benzaldehyde, retinal, pyridoxal, and vanillin. Plays a key role in the metabolism of xenobiotics and drugs containing aromatic azaheterocyclic substituents. Participates in the bioactivation of prodrugs such as famciclovir, catalyzing the oxidation step from 6-deoxypenciclovir to penciclovir, which is a potent antiviral agent. Is probably involved in the regulation of reactive oxygen species homeostasis. May be a prominent source of superoxide generation via the one-electron reduction of molecular oxygen. May also catalyze nitric oxide (NO) production via the reduction of nitrite to NO with NADH or aldehyde as electron donor. May play a role in adipogenesis. This is Aldehyde oxidase 1 (AOX1) from Macaca fascicularis (Crab-eating macaque).